The chain runs to 427 residues: Indole diterpene prenyltransferase idtF (427 aa).

Positions 97, 195, 264, 266, 268, and 352 each coordinate substrate.

It belongs to the tryptophan dimethylallyltransferase family.

It participates in secondary metabolite biosynthesis. Its function is as follows. Indole diterpene prenyltransferase; part of the gene cluster that mediates the biosynthesis of paspalitrems, indole-diterpene (IDT) mycotoxins that are potent tremorgens in mammals. The geranylgeranyl diphosphate (GGPP) synthase idtG is proposed to catalyze the first step in IDT biosynthesis via catalysis of a series of iterative condensations of isopentenyl diphosphate (IPP) with dimethylallyl diphosphate (DMAPP), geranyl diphosphate (GPP), and farnesyl diphosphate (FPP), to form GGPP. Condensation of indole-3-glycerol phosphate with GGPP by the prenyltransferase idtC then forms 3-geranylgeranylindole (3-GGI). Epoxidation of the two terminal alkenes of the geranylgeranyl moiety by the FAD-dependent monooxygenase idtM, and cyclization by the terpene cyclase idtB then leads to the production of paspaline. The cytochrome P450 monooxygenase idtP then catalyzes oxidative elimination of the pendant methyl group at C-12 of paspaline and generates the C-10 ketone to yield 13-desoxypaxilline. The cytochrome P450 monooxygenase idtQ may catalyze the C-13 oxidation of 13-desoxypaxilline to afford paxilline. Considering that both paspalicine and paxilline were detected in C.paspali, idtQ also catalyzes the formation of paspalinine from 13-desoxypaxilline via paspalicine as an intermediate. Finally, the alpha-prenyltransferase idtF prenylates paspalinine at the C-20 or the C-21 positions to yield paspalitrems A and C, respectively. The hydroxylation of paspalitrem A at C-32 by a still unknown oxidase affords paspalitrem B. This is Indole diterpene prenyltransferase idtF from Claviceps paspali (Rye ergot fungus).